The primary structure comprises 173 residues: ADP-ribose 1''-phosphate phosphatase (173 aa).

Residues 1 to 173 form the Macro domain; sequence MIRYIKGDLL…YDVEFNVYVI (173 aa). Residues 7–9, 26–28, 33–38, and 145–151 contribute to the substrate site; these read GDL, ACN, WGGGIA, and INAGIFA.

It belongs to the POA1 family.

The enzyme catalyses ADP-alpha-D-ribose 1''-phosphate + H2O = ADP-D-ribose + phosphate. Functionally, highly specific phosphatase involved in the metabolism of ADP-ribose 1''-phosphate (Appr1p) which is produced as a consequence of tRNA splicing. The polypeptide is ADP-ribose 1''-phosphate phosphatase (POA1) (Scheffersomyces stipitis (strain ATCC 58785 / CBS 6054 / NBRC 10063 / NRRL Y-11545) (Yeast)).